A 640-amino-acid chain; its full sequence is Insulin-like growth factor 1 receptor (640 aa).

2 consecutive Fibronectin type-III domains span residues 5 to 101 (VPRP…TMPA) and 107 to 200 (IPGP…VQAK). At 14-208 (EVMQIANTTM…AKTTYENFIH (195 aa)) the chain is on the extracellular side. N-linked (GlcNAc...) asparagine glycans are attached at residues asparagine 20, asparagine 29, asparagine 37, asparagine 173, and asparagine 186. Residues 209–232 (LMIALPIAVLLIVGGLVIMLYVFH) traverse the membrane as a helical segment. Residues 233 to 640 (RKRNSSRLGN…ALPLPQSSTC (408 aa)) lie on the Cytoplasmic side of the membrane. Positions 250-253 (NPEY) match the IRS1- and SHC1-binding motif. Position 253 is a phosphotyrosine (tyrosine 253). In terms of domain architecture, Protein kinase spans 272–547 (ITMSRELGQG…SVKDEMEAGF (276 aa)). Residues 278–286 (LGQGSFGMV) and lysine 306 each bind ATP. Aspartate 408 acts as the Proton acceptor in catalysis. Phosphotyrosine; by autocatalysis occurs at positions 434, 438, and 439. Residues lysine 441 and lysine 444 each participate in a glycyl lysine isopeptide (Lys-Gly) (interchain with G-Cter in ubiquitin) cross-link. Serine 551 carries the post-translational modification Phosphoserine; by GSK3-beta. Serine 555 bears the Phosphoserine mark. The disordered stretch occupies residues 555–640 (SEENKPPEPE…ALPLPQSSTC (86 aa)). The segment covering 563 to 572 (PEELDLEPEN) has biased composition (acidic residues). The segment covering 573-589 (MESVPLDPSASSASLPL) has biased composition (low complexity). A compositionally biased stretch (basic and acidic residues) spans 590–599 (PDRHSGHKAE).

This sequence belongs to the protein kinase superfamily. Tyr protein kinase family. Insulin receptor subfamily. As to quaternary structure, tetramer of 2 alpha and 2 beta chains linked by disulfide bonds. The alpha chains contribute to the formation of the ligand-binding domain, while the beta chain carries the kinase domain. Interacts with PIK3R1 and with the PTB/PID domains of IRS1 and SHC1 in vitro when autophosphorylated on tyrosine residues. Forms a hybrid receptor with INSR, the hybrid is a tetramer consisting of 1 alpha chain and 1 beta chain of INSR and 1 alpha chain and 1 beta chain of IGF1R. Interacts with ARRB1 and ARRB2. Interacts with GRB10. Interacts with RACK1. Interacts with SOCS1, SOCS2 and SOCS3. Interacts with 14-3-3 proteins. Interacts with NMD2. Interacts with MAP3K5. Interacts with STAT3. Interacts (nascent precursor form) with ZFAND2B. Autophosphorylated on tyrosine residues in response to ligand binding. Autophosphorylation occurs in trans, i.e. one subunit of the dimeric receptor phosphorylates tyrosine residues on the other subunit. Autophosphorylation occurs in a sequential manner; Tyr-438 is predominantly phosphorylated first, followed by phosphorylation of Tyr-434 and Tyr-439. While every single phosphorylation increases kinase activity, all three tyrosine residues in the kinase activation loop (Tyr-438, Tyr-434 and Tyr-439) have to be phosphorylated for optimal activity. Can be autophosphorylated at additional tyrosine residues (in vitro). Autophosphorylated is followed by phosphorylation of juxtamembrane tyrosines and C-terminal serines. May also be phosphorylated at Tyr-434 and Tyr-439 by mTORC2. Phosphorylation of Tyr-253 is required for IRS1- and SHC1-binding. Phosphorylation of Ser-551 by GSK-3beta restrains kinase activity and promotes cell surface expression, it requires a priming phosphorylation at Ser-555. Dephosphorylated by PTPN1. Post-translationally, polyubiquitinated at Lys-441 and Lys-444 through both 'Lys-48' and 'Lys-29' linkages, promoting receptor endocytosis and subsequent degradation by the proteasome. Ubiquitination is facilitated by pre-existing phosphorylation. In terms of processing, sumoylated with SUMO1. Controlled by regulated intramembrane proteolysis (RIP). Undergoes metalloprotease-dependent constitutive ectodomain shedding to produce a membrane-anchored 52 kDa C-Terminal fragment which is further processed by presenilin gamma-secretase to yield an intracellular 50 kDa fragment.

The protein localises to the cell membrane. It carries out the reaction L-tyrosyl-[protein] + ATP = O-phospho-L-tyrosyl-[protein] + ADP + H(+). Activated by autophosphorylation at Tyr-434, Tyr-438 and Tyr-439 on the kinase activation loop; phosphorylation at all three tyrosine residues is required for optimal kinase activity. Inhibited by MSC1609119A-1, BMS-754807, PQIP, benzimidazole pyridinone, isoquinolinedione, bis-azaindole, 3-cyanoquinoline, 2,4-bis-arylamino-1,3-pyrimidine, pyrrolopyrimidine, pyrrole-5-carboxaldehyde, picropodophyllin (PPP), tyrphostin derivatives. While most inhibitors bind to the ATP binding pocket, MSC1609119A-1 functions as allosteric inhibitor and binds close to the DFG motif and the activation loop. Functionally, receptor tyrosine kinase which mediates actions of insulin-like growth factor 1 (IGF1). Binds IGF1 with high affinity and IGF2 and insulin (INS) with a lower affinity. The activated IGF1R is involved in cell growth and survival control. IGF1R is crucial for tumor transformation and survival of malignant cell. Ligand binding activates the receptor kinase, leading to receptor autophosphorylation, and tyrosines phosphorylation of multiple substrates, that function as signaling adapter proteins including, the insulin-receptor substrates (IRS1/2), Shc and 14-3-3 proteins. Phosphorylation of IRSs proteins lead to the activation of two main signaling pathways: the PI3K-AKT/PKB pathway and the Ras-MAPK pathway. The result of activating the MAPK pathway is increased cellular proliferation, whereas activating the PI3K pathway inhibits apoptosis and stimulates protein synthesis. Phosphorylated IRS1 can activate the 85 kDa regulatory subunit of PI3K (PIK3R1), leading to activation of several downstream substrates, including protein AKT/PKB. AKT phosphorylation, in turn, enhances protein synthesis through mTOR activation and triggers the antiapoptotic effects of IGFIR through phosphorylation and inactivation of BAD. In parallel to PI3K-driven signaling, recruitment of Grb2/SOS by phosphorylated IRS1 or Shc leads to recruitment of Ras and activation of the ras-MAPK pathway. In addition to these two main signaling pathways IGF1R signals also through the Janus kinase/signal transducer and activator of transcription pathway (JAK/STAT). Phosphorylation of JAK proteins can lead to phosphorylation/activation of signal transducers and activators of transcription (STAT) proteins. In particular activation of STAT3, may be essential for the transforming activity of IGF1R. The JAK/STAT pathway activates gene transcription and may be responsible for the transforming activity. JNK kinases can also be activated by the IGF1R. IGF1 exerts inhibiting activities on JNK activation via phosphorylation and inhibition of MAP3K5/ASK1, which is able to directly associate with the IGF1R. When present in a hybrid receptor with INSR, binds IGF1. In Bos taurus (Bovine), this protein is Insulin-like growth factor 1 receptor (IGF1R).